A 95-amino-acid chain; its full sequence is Cytochrome b (95 aa).

A run of 3 helical transmembrane segments spans residues 1-16 (GLCL…FLAM), 40-61 (WLIR…YLHI), and 76-95 (WNIG…VGYV). 2 residues coordinate heme b: His-46 and His-60.

This sequence belongs to the cytochrome b family. The cytochrome bc1 complex contains 3 respiratory subunits (MT-CYB, CYC1 and UQCRFS1), 2 core proteins (UQCRC1 and UQCRC2) and probably 6 low-molecular weight proteins. It depends on heme b as a cofactor.

It localises to the mitochondrion inner membrane. Its function is as follows. Component of the ubiquinol-cytochrome c reductase complex (complex III or cytochrome b-c1 complex) that is part of the mitochondrial respiratory chain. The b-c1 complex mediates electron transfer from ubiquinol to cytochrome c. Contributes to the generation of a proton gradient across the mitochondrial membrane that is then used for ATP synthesis. The protein is Cytochrome b (mt-cyb) of Gomphosus varius (Bird wrasse).